The primary structure comprises 122 residues: Large ribosomal subunit protein uL14 (122 aa).

This sequence belongs to the universal ribosomal protein uL14 family. Part of the 50S ribosomal subunit. Forms a cluster with proteins L3 and L19. In the 70S ribosome, L14 and L19 interact and together make contacts with the 16S rRNA in bridges B5 and B8.

In terms of biological role, binds to 23S rRNA. Forms part of two intersubunit bridges in the 70S ribosome. The polypeptide is Large ribosomal subunit protein uL14 (Leuconostoc citreum (strain KM20)).